The sequence spans 315 residues: Olfactory receptor 3A1 (315 aa).

The Extracellular portion of the chain corresponds to 1 to 28; sequence MQPESGANGTVIAEFILLGLLEAPGLQP. An N-linked (GlcNAc...) asparagine glycan is attached at Asn-8. A helical membrane pass occupies residues 29 to 52; the sequence is VVFVLFLFAYLVTVRGNLSILAAV. Topologically, residues 53-60 are cytoplasmic; it reads LVEPKLHT. Residues 61–82 form a helical membrane-spanning segment; that stretch reads PMYFFLGNLSVLDVGCISVTVP. The Extracellular portion of the chain corresponds to 83-103; it reads SMLSRLLSRKRAVPCGACLTQ. Residues Cys-100 and Cys-192 are joined by a disulfide bond. The helical transmembrane segment at 104-123 threads the bilayer; that stretch reads LFFFHLFVGVDCFLLTAMAY. Residues 124–143 lie on the Cytoplasmic side of the membrane; the sequence is DRFLAICRPLTYSTRMSQTV. A helical membrane pass occupies residues 144–161; that stretch reads QRMLVAASWACAFTNALT. Residues 162-199 are Extracellular-facing; that stretch reads HTVAMSTLNFCGPNVINHFYCDLPQLFQLSCSSTQLNE. The chain crosses the membrane as a helical span at residues 200–223; that stretch reads LLLFAVGFIMAGTPMALIVISYIH. Over 224–240 the chain is Cytoplasmic; sequence VAAAVLRIRSVEGRKKA. Residues 241-264 form a helical membrane-spanning segment; the sequence is FSTCGSHLTVVAIFYGSGIFNYMR. The Extracellular portion of the chain corresponds to 265-275; it reads LGSTKLSDKDK. Residues 276-295 traverse the membrane as a helical segment; the sequence is AVGIFNTVINPMLNPIIYSF. Residues 296–315 are Cytoplasmic-facing; sequence RNPDVQSAIWRMLTGRRSLA.

The protein belongs to the G-protein coupled receptor 1 family.

It localises to the cell membrane. Its function is as follows. Odorant receptor. The protein is Olfactory receptor 3A1 (OR3A1) of Homo sapiens (Human).